A 386-amino-acid chain; its full sequence is Protein-glutamate methylesterase/protein-glutamine glutaminase (386 aa).

A Response regulatory domain is found at 4 to 121 (KVLVVDDSAF…ARNRDEAVKT (118 aa)). D55 bears the 4-aspartylphosphate mark. The interval 133–161 (PVSRTSARASTPPPVAKQPERSSEPTTAL) is disordered. The 195-residue stretch at 190–384 (INRAYQLLAI…KAIMKEVGYS (195 aa)) folds into the CheB-type methylesterase domain. Catalysis depends on residues S202, H229, and D326.

Belongs to the CheB family. Post-translationally, phosphorylated by CheA. Phosphorylation of the N-terminal regulatory domain activates the methylesterase activity.

It localises to the cytoplasm. It carries out the reaction [protein]-L-glutamate 5-O-methyl ester + H2O = L-glutamyl-[protein] + methanol + H(+). The catalysed reaction is L-glutaminyl-[protein] + H2O = L-glutamyl-[protein] + NH4(+). Functionally, involved in chemotaxis. Part of a chemotaxis signal transduction system that modulates chemotaxis in response to various stimuli. Catalyzes the demethylation of specific methylglutamate residues introduced into the chemoreceptors (methyl-accepting chemotaxis proteins or MCP) by CheR. Also mediates the irreversible deamidation of specific glutamine residues to glutamic acid. This is Protein-glutamate methylesterase/protein-glutamine glutaminase from Idiomarina loihiensis (strain ATCC BAA-735 / DSM 15497 / L2-TR).